A 78-amino-acid polypeptide reads, in one-letter code: Large ribosomal subunit protein bL28 (78 aa).

The tract at residues 1–23 (MSRVCQVSGKRVQTGNNVSHANN) is disordered. A compositionally biased stretch (polar residues) spans 11–22 (RVQTGNNVSHAN).

Belongs to the bacterial ribosomal protein bL28 family.

This Xanthomonas campestris pv. campestris (strain 8004) protein is Large ribosomal subunit protein bL28.